The following is a 371-amino-acid chain: Mitogen-activated protein kinase homolog NTF6 (371 aa).

The 287-residue stretch at 38-324 (IPPIQPVGRG…VEDALNHPFL (287 aa)) folds into the Protein kinase domain. Residues 44-52 (VGRGAYGMV) and K67 contribute to the ATP site. D164 acts as the Proton acceptor in catalysis. T196 is modified (phosphothreonine). The short motif at 196–198 (TEY) is the TXY element. Phosphotyrosine is present on Y198.

The protein belongs to the protein kinase superfamily. CMGC Ser/Thr protein kinase family. MAP kinase subfamily. Requires Mg(2+) as cofactor. Post-translationally, dually phosphorylated on Thr-196 and Tyr-198, which activates the enzyme. Very low autophosphorylation, although dramatically increased when Mn(2+) is added to the reaction instead of Mg(2+).

It catalyses the reaction L-seryl-[protein] + ATP = O-phospho-L-seryl-[protein] + ADP + H(+). The catalysed reaction is L-threonyl-[protein] + ATP = O-phospho-L-threonyl-[protein] + ADP + H(+). Activated by tyrosine and threonine phosphorylation. The polypeptide is Mitogen-activated protein kinase homolog NTF6 (NTF6) (Nicotiana tabacum (Common tobacco)).